Reading from the N-terminus, the 89-residue chain is Cornifin (89 aa).

Residues 1 to 29 form a disordered region; it reads MSSQQQKQPCTPPPQLQQQQVKQPCQPPP. Ser-2 carries the N-acetylserine modification. 8 consecutive repeat copies span residues 3-14, 18-29, 31-38, 39-46, 47-54, 55-62, 63-70, and 71-78. Residues 3-29 are 2 X 12 AA approximate repeats; the sequence is SQQQKQPCTPPPQLQQQQVKQPCQPPP. The interval 31 to 78 is 6 X 8 AA approximate tandem repeats; sequence EPCIPKTKEPCLPKVPEPCHPKVPEPCQPKVPEPCHPKVPEPCPSTVT. The interval 68–89 is disordered; it reads KVPEPCPSTVTPAPAQQKTKQK. Over residues 75–89 the composition is skewed to polar residues; sequence STVTPAPAQQKTKQK.

The protein belongs to the cornifin (SPRR) family.

It localises to the cytoplasm. Its function is as follows. Cross-linked envelope protein of keratinocytes. It is a keratinocyte protein that first appears in the cell cytosol, but ultimately becomes cross-linked to membrane proteins by transglutaminase. All that results in the formation of an insoluble envelope beneath the plasma membrane. The protein is Cornifin (SPRR1) of Macaca mulatta (Rhesus macaque).